Reading from the N-terminus, the 242-residue chain is Uridylate kinase (242 aa).

8 to 11 (KFSG) lines the ATP pocket. G50 lines the UMP pocket. Positions 51 and 55 each coordinate ATP. Residues D71 and 132–139 (TGNPFFTT) contribute to the UMP site. 3 residues coordinate ATP: T159, Y165, and D168.

This sequence belongs to the UMP kinase family. Homohexamer.

It is found in the cytoplasm. The enzyme catalyses UMP + ATP = UDP + ADP. It functions in the pathway pyrimidine metabolism; CTP biosynthesis via de novo pathway; UDP from UMP (UMPK route): step 1/1. Its activity is regulated as follows. Inhibited by UTP. Catalyzes the reversible phosphorylation of UMP to UDP. This Nitratiruptor sp. (strain SB155-2) protein is Uridylate kinase.